The primary structure comprises 688 residues: Elongation factor G (688 aa).

Residues Lys-8–Val-282 enclose the tr-type G domain. Residues Ala-17–Thr-24, Asp-81–His-85, and Asn-135–Asp-138 contribute to the GTP site.

It belongs to the TRAFAC class translation factor GTPase superfamily. Classic translation factor GTPase family. EF-G/EF-2 subfamily.

It is found in the cytoplasm. Catalyzes the GTP-dependent ribosomal translocation step during translation elongation. During this step, the ribosome changes from the pre-translocational (PRE) to the post-translocational (POST) state as the newly formed A-site-bound peptidyl-tRNA and P-site-bound deacylated tRNA move to the P and E sites, respectively. Catalyzes the coordinated movement of the two tRNA molecules, the mRNA and conformational changes in the ribosome. In Mycoplasma genitalium (strain ATCC 33530 / DSM 19775 / NCTC 10195 / G37) (Mycoplasmoides genitalium), this protein is Elongation factor G (fusA).